The following is a 616-amino-acid chain: Homeodomain-interacting protein kinase 4 (616 aa).

Residues 11–347 (YDIIEVLGKG…PSAALRHPFV (337 aa)) enclose the Protein kinase domain. ATP-binding positions include 17–25 (LGKGTFGEV) and Lys-40. Asp-136 serves as the catalytic Proton acceptor. The disordered stretch occupies residues 487–616 (HKARKAPAGS…SFLQHVGGHH (130 aa)). The span at 497–512 (KSDSNFSNLIRLSQAS) shows a compositional bias: polar residues. Residue Ser-512 is modified to Phosphoserine. Basic and acidic residues predominate over residues 542–560 (REGDGPSIKDRPMDAERSG).

Belongs to the protein kinase superfamily. CMGC Ser/Thr protein kinase family. HIPK subfamily. Post-translationally, autophosphorylated.

The protein resides in the cytoplasm. The catalysed reaction is L-seryl-[protein] + ATP = O-phospho-L-seryl-[protein] + ADP + H(+). The enzyme catalyses L-threonyl-[protein] + ATP = O-phospho-L-threonyl-[protein] + ADP + H(+). In terms of biological role, protein kinase that phosphorylates TP53, and thus induces TP53 repression of BIRC5 promoter. May act as a corepressor of transcription factors (Potential). This is Homeodomain-interacting protein kinase 4 (Hipk4) from Rattus norvegicus (Rat).